The primary structure comprises 249 residues: Enolase-phosphatase E1 (249 aa).

Residues Asp-14 and Glu-16 each coordinate Mg(2+). Substrate is bound by residues 141–142 and Lys-175; that span reads SS. Asp-200 provides a ligand contact to Mg(2+).

Belongs to the HAD-like hydrolase superfamily. MasA/MtnC family. In terms of assembly, monomer. It depends on Mg(2+) as a cofactor.

The protein resides in the cytoplasm. It is found in the nucleus. It carries out the reaction 5-methylsulfanyl-2,3-dioxopentyl phosphate + H2O = 1,2-dihydroxy-5-(methylsulfanyl)pent-1-en-3-one + phosphate. It functions in the pathway amino-acid biosynthesis; L-methionine biosynthesis via salvage pathway; L-methionine from S-methyl-5-thio-alpha-D-ribose 1-phosphate: step 3/6. The protein operates within amino-acid biosynthesis; L-methionine biosynthesis via salvage pathway; L-methionine from S-methyl-5-thio-alpha-D-ribose 1-phosphate: step 4/6. Functionally, bifunctional enzyme that catalyzes the enolization of 2,3-diketo-5-methylthiopentyl-1-phosphate (DK-MTP-1-P) into the intermediate 2-hydroxy-3-keto-5-methylthiopentenyl-1-phosphate (HK-MTPenyl-1-P), which is then dephosphorylated to form the acireductone 1,2-dihydroxy-3-keto-5-methylthiopentene (DHK-MTPene). This chain is Enolase-phosphatase E1, found in Drosophila virilis (Fruit fly).